A 501-amino-acid polypeptide reads, in one-letter code: Glutamyl-tRNA(Gln) amidotransferase subunit A (501 aa).

Residues lysine 80 and serine 155 each act as charge relay system in the active site. The active-site Acyl-ester intermediate is serine 179.

It belongs to the amidase family. GatA subfamily. As to quaternary structure, heterotrimer of A, B and C subunits.

It carries out the reaction L-glutamyl-tRNA(Gln) + L-glutamine + ATP + H2O = L-glutaminyl-tRNA(Gln) + L-glutamate + ADP + phosphate + H(+). Its function is as follows. Allows the formation of correctly charged Gln-tRNA(Gln) through the transamidation of misacylated Glu-tRNA(Gln) in organisms which lack glutaminyl-tRNA synthetase. The reaction takes place in the presence of glutamine and ATP through an activated gamma-phospho-Glu-tRNA(Gln). This chain is Glutamyl-tRNA(Gln) amidotransferase subunit A, found in Cupriavidus necator (strain ATCC 17699 / DSM 428 / KCTC 22496 / NCIMB 10442 / H16 / Stanier 337) (Ralstonia eutropha).